Reading from the N-terminus, the 794-residue chain is MIITRNWLKKYLNLDNISNDQINVALNSLGFEVDNVYDLNSLNSELVLGYVEQSKQIPDTHLKLNKVNIGTKSLQIVCGASNVDVNQFVIVAPINATIANGLTLTSKKIQNYESQGMICALNEIGINQSVINKEDQLKIYNVFDKNLDLKKYLGKDVKQIIGLDDYLFEIDLTLNRSDCLASFQILKELANYFDLEIKNYDNKFNDFKENDLDLKITISKKIEEQIKTISYSNFVLNNHLNKLDSIDDIFLKLNQISSTNNLINDLSLLSTLSTAQTHILIDLDKLKSFNLKLELINHNDKELLCLTSDNQIVNIIGLQTESKFSIDNNSKNVLNIMVNIEPNLMRKQQKLLNTSNINLQRYIKPINPNLFDLANLNLTSLLNSYNLVNKAYKVKVLKQTYKNKTEFEIKISEINDLLGTNLTIDQIKSLFKKLDFKITNKNDLLTFNIDPNRIDISSKNDLCEEVARLYSYDNIQEVALSFTSFKKPKNLNLKLENKLTNYLIGLGFNNTKTYSLTTQIDAKHWNLFNISDFINLLSPLSNLRQTYRTSLSKSLIDTAIYNHSINNKELKLFEIADIYNLNQLKQRHLVFLTSHHIYKNGLTHQLVENNFYYNKEILESIFDLYNLDFSQIKYVNNLDVIKEIHLYINATIYYQKQLVGFIYQLNPKFESENKLNKTFVCEINLDVLNELKNKTIEAKTLSKFQSSSRDLTIEISNDLIYQDVLLKAISDVKYITSSKVVDLYLDDKLAKNNTKALTIQFIFNDLDHQLTEAEINTEFEKIISNVKKMKVVIR.

Positions 40–158 (NSLNSELVLG…LKKYLGKDVK (119 aa)) constitute a tRNA-binding domain. Residues 402-477 (KNKTEFEIKI…RLYSYDNIQE (76 aa)) form the B5 domain. Residues D455, D461, E464, and E465 each contribute to the Mg(2+) site. Residues 702–794 (SKFQSSSRDL…NVKKMKVVIR (93 aa)) enclose the FDX-ACB domain.

It belongs to the phenylalanyl-tRNA synthetase beta subunit family. Type 1 subfamily. In terms of assembly, tetramer of two alpha and two beta subunits. Mg(2+) serves as cofactor.

It localises to the cytoplasm. The enzyme catalyses tRNA(Phe) + L-phenylalanine + ATP = L-phenylalanyl-tRNA(Phe) + AMP + diphosphate + H(+). This chain is Phenylalanine--tRNA ligase beta subunit, found in Mycoplasma capricolum subsp. capricolum (strain California kid / ATCC 27343 / NCTC 10154).